Here is a 131-residue protein sequence, read N- to C-terminus: MKYFVVALALVAAFACIAESKPAESEHELAEVEEENELADLEDAVWLEHLADLSDLEEARGFFGNTWKKIKGKADKIMLKKAVKIMVKKEGISKEEAQAKVDAMSKKQIRLYLLKHYGKKLFKKRPKNCDQ.

The N-terminal stretch at 1 to 20 (MKYFVVALALVAAFACIAES) is a signal peptide. Positions 21-60 (KPAESEHELAEVEEENELADLEDAVWLEHLADLSDLEEAR) are excised as a propeptide.

The protein belongs to the cationic peptide 06 (cytoinsectotoxin) family. As to expression, expressed by the venom gland.

Its subcellular location is the secreted. Functionally, insecticidal, cytolytic and antimicrobial peptide. Forms voltage-dependent, ion-permeable channels in membranes. At high concentration causes cell membrane lysis. This Lachesana tarabaevi (Spider) protein is M-zodatoxin-Lt8m (cit 1-13).